The chain runs to 81 residues: Photosystem I iron-sulfur center (81 aa).

2 4Fe-4S ferredoxin-type domains span residues Ala-2–Trp-31 and Ile-39–Tyr-68. Residues Cys-11, Cys-14, Cys-17, Cys-21, Cys-48, Cys-51, Cys-54, and Cys-58 each coordinate [4Fe-4S] cluster.

As to quaternary structure, the eukaryotic PSI reaction center is composed of at least 11 subunits. The cofactor is [4Fe-4S] cluster.

It is found in the plastid. It localises to the chloroplast thylakoid membrane. It catalyses the reaction reduced [plastocyanin] + hnu + oxidized [2Fe-2S]-[ferredoxin] = oxidized [plastocyanin] + reduced [2Fe-2S]-[ferredoxin]. Its function is as follows. Apoprotein for the two 4Fe-4S centers FA and FB of photosystem I (PSI); essential for photochemical activity. FB is the terminal electron acceptor of PSI, donating electrons to ferredoxin. The C-terminus interacts with PsaA/B/D and helps assemble the protein into the PSI complex. Required for binding of PsaD and PsaE to PSI. PSI is a plastocyanin-ferredoxin oxidoreductase, converting photonic excitation into a charge separation, which transfers an electron from the donor P700 chlorophyll pair to the spectroscopically characterized acceptors A0, A1, FX, FA and FB in turn. In Marchantia polymorpha (Common liverwort), this protein is Photosystem I iron-sulfur center.